Reading from the N-terminus, the 637-residue chain is MVGEPKIVSVWQFPFPIVTGRHLPYCPGNCAAHLNYEIAHQLLFSLSHQPRSRILVNRMIFSSPAWVPSPDQSAPDQVPIGDYVLSNHVLSKNDAPFVDAISGHVYTMAMLRTRVESLARGLAADLNWSPNTGSPEEKVVAIYSLNTVALSGPLLTIMYKIDYFILCWAVHRLNGICMPLHSTCTSAEITSHMITASCTTIFTCSGLMSTCLEAAKELQLPAEKIYTLALPSTYLDNANLEDSPRLKTLEQLADQGSQLPQLEPLRWSAGQGKSQVAFLCSTSGTSGRQKLAMLTHYGIITNLLQMSAFEGFANDTYGQTVAAAIPFSHSYGILIGHVGVLRGESHIVFPRFDMQRMLGSVASYRVNRLYLVPPILAVLGANSFLMEPFDLSSVTSVVTGAAALDRTVAGRLKSLQPSWEFLHAWGLTETCIVVTFTSKHDVWYGSSGSLLPGCQLRLVDAEGKDVENYDQSGEVYYKAPNMFVGYLGDHESTISSFDDDGWMRTGDMGAIQVSPNGVEHLFIRDRIKDMIKVKGMQVIPADVEAAMLTHPAVADVAVIGVPDELAGERAMAFVIRSTSVMSEFSEDDLRDSINDHLEDRLHETHWLGDRLEFVAEIPKSQSGKVLKKILREKAASN.

ATP is bound by residues 282–290, 423–428, D507, R526, and K624; these read TSGTSGRQK and HAWGLT. Residues 353 to 423 form an SBD1 region; it reads DMQRMLGSVA…SLQPSWEFLH (71 aa). The tract at residues 424–486 is SBD2; the sequence is AWGLTETCIV…YKAPNMFVGY (63 aa).

The protein belongs to the ATP-dependent AMP-binding enzyme family.

It functions in the pathway secondary metabolite biosynthesis. In terms of biological role, acyl-CoA ligase; part of the gene cluster that mediates the biosynthesis of beauveriolides I and III, cyclodepsipeptides acting as inhibitors of the acyl-CoA:cholesterol acyltransferase. The HR-PKS cm3B initiates the biosynthesis of beauveriolides by iteratively catalyzing the formation of the linear polyketide chain. The ATP-dependent acetyl-CoA ligase cm3D converts the polyketide carboxylic acid to a CoA thioester which id shuttled to the first T domain in the NRPS cm3A by the acetyltransferase cm3C. Cm3A contains 13 domains and assembles the polyketide chain, L-phenylalanine, L-alanine, and D-leucine (or D-allo-isoleucine) to form beauveriolide I (or beauveriolide III). The production of both beauveriolides I and III suggests the substrate adaptability of cm3B, using different amino acids as substrates. In Cordyceps militaris (strain CM01) (Caterpillar fungus), this protein is Acyl-CoA ligase cm3C.